The primary structure comprises 552 residues: Non-structural protein NS1 (552 aa).

It belongs to the orbivirus non-structural protein NS1 family.

In Bluetongue virus 13 (isolate USA) (BTV 13), this protein is Non-structural protein NS1 (Segment-5).